The chain runs to 235 residues: Voltage-gated hydrogen channel 1 (235 aa).

The Cytoplasmic portion of the chain corresponds to 1 to 65; the sequence is MSRYLKHFTA…SLRKLYSTER (65 aa). The chain crosses the membrane as a helical span at residues 66-86; the sequence is FQIVVVCLVVLDAIFVLCELL. At 87 to 103 the chain is on the extracellular side; the sequence is IDLSIIEADHHRIAPQV. A helical transmembrane segment spans residues 104 to 126; that stretch reads FHYLSLALLTFFMVELAGKIFAY. Topologically, residues 127–134 are cytoplasmic; the sequence is RLEFLHHK. Residues 135–155 form a helical membrane-spanning segment; it reads FEVFDGIVVVVSFILDIIYIS. At 156–162 the chain is on the extracellular side; that stretch reads KEDAFDA. The chain crosses the membrane as a helical span at residues 163-183; it reads MGLLILLRLWRVARIINGILV. Residues 184 to 235 lie on the Cytoplasmic side of the membrane; sequence SVQNRANHRVEKLKEINESLVHQVNELKEQNTKMDQENVRLRALLKDHSIDF. The stretch at 187–231 forms a coiled coil; it reads NRANHRVEKLKEINESLVHQVNELKEQNTKMDQENVRLRALLKDH.

The protein belongs to the hydrogen channel family. As to quaternary structure, homodimer.

Its subcellular location is the membrane. It localises to the cell membrane. Its function is as follows. Mediates the voltage-dependent proton permeability of excitable membranes. Forms a proton-selective channel through which protons may pass in accordance with their electrochemical gradient. This is Voltage-gated hydrogen channel 1 (hvcn1) from Danio rerio (Zebrafish).